Reading from the N-terminus, the 137-residue chain is Large ribosomal subunit protein uL16 (137 aa).

Positions 1-17 (MLQPKRTKFRKTHKGRN) are enriched in basic residues. Residues 1-23 (MLQPKRTKFRKTHKGRNRGLAQN) are disordered.

Belongs to the universal ribosomal protein uL16 family. As to quaternary structure, part of the 50S ribosomal subunit.

In terms of biological role, binds 23S rRNA and is also seen to make contacts with the A and possibly P site tRNAs. The chain is Large ribosomal subunit protein uL16 from Pseudoalteromonas translucida (strain TAC 125).